The primary structure comprises 450 residues: MGKYFGTDGVRGEANVELTPELAFKLGRFGGYVLSQHESEVPRVFVGRDTRISGEMLESALVAGLLSVGIHVYKLGVIATPGVAYLVKSEKASAGVMISASHNPALDNGIKFFGGDGYKLDDERELEIEALLDAAEDTLPRPSAEGLGDLVDYPEGLRKYQQYLVSTGLELEGMHVALDTANGAASTSARQIFADLGAQLTIIGENPDGLNINLNVGSTHPEALQEVVRESGAAIGLAFDGDSDRLIAVDENGELVDGDKIMYIIGKYLSEKGELAQNTIVTTVMSNLGFHKALDREGIQKAVTAVGDRYVVEEMRKNGYNLGGEQSGHVIIMDYNTTGDGQLSAVQLTKVMQETGKKLSELAAEVTIYPQKLVNIRVENSMKDKAMEVPAIKTVIERMEAEMAGNGRILVRPSGTEPLLRVMAEAPTDEEVNYYVDTIANVVRDEIGID.

The active-site Phosphoserine intermediate is the Ser101. Residues Ser101, Asp240, Asp242, and Asp244 each contribute to the Mg(2+) site. Ser101 is modified (phosphoserine).

This sequence belongs to the phosphohexose mutase family. The cofactor is Mg(2+). Activated by phosphorylation.

The enzyme catalyses alpha-D-glucosamine 1-phosphate = D-glucosamine 6-phosphate. Catalyzes the conversion of glucosamine-6-phosphate to glucosamine-1-phosphate. The chain is Phosphoglucosamine mutase from Streptococcus sanguinis (strain SK36).